Here is a 236-residue protein sequence, read N- to C-terminus: Small ribosomal subunit protein uS2c (236 aa).

The protein belongs to the universal ribosomal protein uS2 family.

The protein resides in the plastid. It localises to the chloroplast. In Eucalyptus globulus subsp. globulus (Tasmanian blue gum), this protein is Small ribosomal subunit protein uS2c (rps2).